A 537-amino-acid chain; its full sequence is Formimidoyltransferase-cyclodeaminase (537 aa).

A formiminotransferase N-subdomain region spans residues 1–181; sequence MNKLVECVPN…GASVTGARSF (181 aa). The active-site For formimidoyltransferase activity is His-82. 163–172 lines the folate pocket; it reads GPAKFIPSYG. Residues 182–326 are formiminotransferase C-subdomain; it reads LIAYNVNILG…PKKRIIDYMV (145 aa). A linker region spans residues 327 to 335; the sequence is QEDLKVTQP. Residues 336 to 537 form a cyclodeaminase/cyclohydrolase region; sequence LASMSVRGFV…VLEILSNRKE (202 aa). Asp-413 serves as the catalytic For cyclodeaminase activity.

It in the C-terminal section; belongs to the cyclodeaminase/cyclohydrolase family. This sequence in the N-terminal section; belongs to the formiminotransferase family. As to quaternary structure, homooctamer, including four polyglutamate binding sites. The subunits are arranged as a tetramer of dimers, and form a planar ring-shaped structure.

The protein localises to the cytoplasm. The protein resides in the cytosol. It is found in the golgi apparatus. Its subcellular location is the cytoskeleton. It localises to the microtubule organizing center. The protein localises to the centrosome. The protein resides in the centriole. The enzyme catalyses 5-formimidoyltetrahydrofolate + L-glutamate = N-formimidoyl-L-glutamate + (6S)-5,6,7,8-tetrahydrofolate. It catalyses the reaction 5-formimidoyltetrahydrofolate + 2 H(+) = (6R)-5,10-methenyltetrahydrofolate + NH4(+). It functions in the pathway amino-acid degradation; L-histidine degradation into L-glutamate; L-glutamate from N-formimidoyl-L-glutamate (transferase route): step 1/1. In terms of biological role, folate-dependent enzyme, that displays both transferase and deaminase activity. Serves to channel one-carbon units from formiminoglutamate to the folate pool. This chain is Formimidoyltransferase-cyclodeaminase (ftcd), found in Dictyostelium discoideum (Social amoeba).